The chain runs to 577 residues: F-box-like/WD repeat-containing protein TBL1X (577 aa).

Residues 55–87 (TSDEVNFLVYRYLQESGFSHSAFTFGIESHISQ) enclose the LisH domain. Residues 92–137 (GTLVPPAALISILQKGLQYVEAEISINEDGTVFDGRPIESLSLIDA) form the F-box-like domain. An N6-acetyllysine modification is found at K153. Residues 177–202 (TTSAGVSHQNPSKNREATVNGEENRA) form a disordered region. Residue S183 is modified to Phosphoserine. WD repeat units follow at residues 230-269 (GHES…NGGS), 286-325 (PSNK…ASTL), 327-366 (QHKG…AKQQ), 369-409 (FHSA…KTFQ), 410-449 (GHTN…CIHD), 452-500 (AHNK…CTHT), 503-542 (KHQE…LVHS), and 544-576 (RGTG…LDLR). A Glycyl lysine isopeptide (Lys-Gly) (interchain with G-Cter in SUMO2) cross-link involves residue K340.

This sequence belongs to the WD repeat EBI family. As to quaternary structure, homotetramer; dimer of dimers. Component of the N-Cor repressor complex, at least composed of NCOR1, NCOR2, HDAC3, TBL1X, TBL1R, CORO2A and GPS2. Interacts with GPS2 (when sumoylated); leading to protect GPS2 against degradation by the proteasome. Component of a E3 ubiquitin ligase complex containing UBE2D1, SIAH1, CACYBP/SIP, SKP1, APC and TBL1X. Probably part of other corepressor complexes, that do not contain NCOR1 and NCOR2. Interacts with histones H2B, H3a and H4. Interacts with MECP2; recruits TBL1X to the heterochromatin foci. Interacts with USP44. Ubiquitous.

It is found in the nucleus. F-box-like protein involved in the recruitment of the ubiquitin/19S proteasome complex to nuclear receptor-regulated transcription units. Plays an essential role in transcription activation mediated by nuclear receptors. Probably acts as integral component of corepressor complexes that mediates the recruitment of the 19S proteasome complex, leading to the subsequent proteasomal degradation of transcription repressor complexes, thereby allowing cofactor exchange. In Homo sapiens (Human), this protein is F-box-like/WD repeat-containing protein TBL1X (TBL1X).